The following is a 372-amino-acid chain: MHSQAPIQRRKSTRIYVGNVPIGDGAPIAVQSMTNTRTTDVEATVNQIKALERVGADIVRVSVPTMDAAEAFKLIKQRVNVPLVADIHFDYRIALKVAEYGVDCLRINPGNIGNEERIRMVVDCARDKNIPIRIGVNAGSLEKDLQEKYGEPTPQALLESAMRHVDHLDRLNFDQFKVSVKASDVFLAVESYRLLAKQIDQPLHLGITEAGGARSGAVKSAIGLGLLLSEGIGDTLRVSLAADPVEEIKVGFDILKSLRIRSRGINFIACPTCSRQEFDVIGTVNALEQRLEDIITPMDVSIIGCVVNGPGEALVSTLGVTGGNKKSGLYEDGVRKDRLDNNDMIDQLEARIRAKASQLDEARRIDVQQVEK.

[4Fe-4S] cluster contacts are provided by C270, C273, C305, and E312.

Belongs to the IspG family. [4Fe-4S] cluster is required as a cofactor.

The catalysed reaction is (2E)-4-hydroxy-3-methylbut-2-enyl diphosphate + oxidized [flavodoxin] + H2O + 2 H(+) = 2-C-methyl-D-erythritol 2,4-cyclic diphosphate + reduced [flavodoxin]. It functions in the pathway isoprenoid biosynthesis; isopentenyl diphosphate biosynthesis via DXP pathway; isopentenyl diphosphate from 1-deoxy-D-xylulose 5-phosphate: step 5/6. Functionally, converts 2C-methyl-D-erythritol 2,4-cyclodiphosphate (ME-2,4cPP) into 1-hydroxy-2-methyl-2-(E)-butenyl 4-diphosphate. In Shigella dysenteriae serotype 1 (strain Sd197), this protein is 4-hydroxy-3-methylbut-2-en-1-yl diphosphate synthase (flavodoxin).